The following is a 266-amino-acid chain: Zinc finger protein CG30 (266 aa).

An RING-type zinc finger spans residues 8-63 (CNICFSVAEIKNYFMQPIDRLTMIPVLELDTCKHQLCSMCIRKIRKRKKTPCPLCR).

It is found in the host nucleus. Its function is as follows. Plays a role in the proper expression of late and very late genes. In Bombyx mori nuclear polyhedrosis virus (BmNPV), this protein is Zinc finger protein CG30 (CG30).